We begin with the raw amino-acid sequence, 68 residues long: Large ribosomal subunit protein uL30 (68 aa).

The protein belongs to the universal ribosomal protein uL30 family. As to quaternary structure, part of the 50S ribosomal subunit.

This Bartonella henselae (strain ATCC 49882 / DSM 28221 / CCUG 30454 / Houston 1) (Rochalimaea henselae) protein is Large ribosomal subunit protein uL30.